The sequence spans 244 residues: Short-chain dehydrogenase/reductase family member NovK (244 aa).

NADP(+) is bound by residues 9 to 12 (GGGE), 59 to 60 (EL), and 154 to 158 (RPVLD).

This sequence belongs to the short-chain dehydrogenases/reductases (SDR) family. As to quaternary structure, heterotetramer; the NovJ(2)K(2) heterotetramer is composed of subunits of 2 NovJ and 2 subunits of NovK.

The protein operates within antibiotic biosynthesis; novobiocin biosynthesis. Non-catalytic subunit of the NovJ(2)K(2) heterotetramer that catalyzes the NADPH-dependent reduction of the tyrosyl moiety of L-beta-OH-Tyr-S-NovH intermediate to yield the tethered beta-ketotyrosyl-S-NovH in the novobiocin biosynthesis pathway. Novobiocin is an aminocoumarin family antibiotic that targets bacterial DNA gyrases. This Streptomyces niveus (Streptomyces spheroides) protein is Short-chain dehydrogenase/reductase family member NovK (novK).